A 400-amino-acid polypeptide reads, in one-letter code: Putative F-box protein At5g41510 (400 aa).

An F-box domain is found at 2–47; sequence ATMISNLPRDLIEEIFSRVPLTSMKAVRLTCKSWNNLSKSESFTKV.

This is Putative F-box protein At5g41510 from Arabidopsis thaliana (Mouse-ear cress).